The sequence spans 374 residues: Serine/threonine-protein kinase-transforming protein mos (374 aa).

The Protein kinase domain occupies 94 to 370; sequence VCLMHRLGSG…LLQRDLKAFR (277 aa). ATP contacts are provided by residues 100–108 and Lys-121; that span reads LGSGGFGSV. The active-site Proton acceptor is Asp-229.

The protein belongs to the protein kinase superfamily. Ser/Thr protein kinase family.

The enzyme catalyses L-seryl-[protein] + ATP = O-phospho-L-seryl-[protein] + ADP + H(+). It carries out the reaction L-threonyl-[protein] + ATP = O-phospho-L-threonyl-[protein] + ADP + H(+). The polypeptide is Serine/threonine-protein kinase-transforming protein mos (V-MOS) (Mus musculus (Mouse)).